The chain runs to 444 residues: Serine--tRNA ligase (444 aa).

243–245 (TAE) is a binding site for L-serine. Residue 274–276 (RSE) coordinates ATP. Residue E297 participates in L-serine binding. Position 361 to 364 (361 to 364 (EISS)) interacts with ATP. An L-serine-binding site is contributed by S397.

Belongs to the class-II aminoacyl-tRNA synthetase family. Type-1 seryl-tRNA synthetase subfamily. As to quaternary structure, homodimer. The tRNA molecule binds across the dimer.

It localises to the cytoplasm. The enzyme catalyses tRNA(Ser) + L-serine + ATP = L-seryl-tRNA(Ser) + AMP + diphosphate + H(+). It carries out the reaction tRNA(Sec) + L-serine + ATP = L-seryl-tRNA(Sec) + AMP + diphosphate + H(+). Its pathway is aminoacyl-tRNA biosynthesis; selenocysteinyl-tRNA(Sec) biosynthesis; L-seryl-tRNA(Sec) from L-serine and tRNA(Sec): step 1/1. Catalyzes the attachment of serine to tRNA(Ser). Is also able to aminoacylate tRNA(Sec) with serine, to form the misacylated tRNA L-seryl-tRNA(Sec), which will be further converted into selenocysteinyl-tRNA(Sec). In Acidobacterium capsulatum (strain ATCC 51196 / DSM 11244 / BCRC 80197 / JCM 7670 / NBRC 15755 / NCIMB 13165 / 161), this protein is Serine--tRNA ligase.